A 492-amino-acid polypeptide reads, in one-letter code: Cytochrome P450 26A1 (492 aa).

Cysteine 438 serves as a coordination point for heme.

Belongs to the cytochrome P450 family. It depends on heme as a cofactor.

It localises to the endoplasmic reticulum membrane. Its subcellular location is the microsome membrane. The enzyme catalyses all-trans-retinoate + reduced [NADPH--hemoprotein reductase] + O2 = all-trans-(4S)-hydroxyretinoate + oxidized [NADPH--hemoprotein reductase] + H2O + H(+). Functionally, a cytochrome P450 monooxygenase involved in the metabolism of all-trans retinoic acid (atRA), a signaling molecule that binds to retinoic acid receptors and regulates gene transcription. Mechanistically, uses molecular oxygen inserting one oxygen atom into a substrate, and reducing the second into a water molecule, with two electrons provided by NADPH via cytochrome P450 reductase (CPR; NADPH-ferrihemoprotein reductase). Catalyzes the hydroxylation of carbon hydrogen bonds of atRA primarily at C-4. Has no activity toward 9-cis and 13-cis retinoic acid stereoisomers. May play a role in the oxidative metabolism of xenobiotics such as tazarotenic acid. The polypeptide is Cytochrome P450 26A1 (cyp26a1) (Danio rerio (Zebrafish)).